Here is a 347-residue protein sequence, read N- to C-terminus: Violet-sensitive opsin (347 aa).

Residues 1-31 lie on the Extracellular side of the membrane; the sequence is MLEEEDFYLFKNVSNVSPFDGPQYHIAPKWA. Asn-12 carries N-linked (GlcNAc...) asparagine glycosylation. A helical transmembrane segment spans residues 32–56; that stretch reads FTLQAIFMGMVFLIGTPLNFIVLLV. At 57–68 the chain is on the cytoplasmic side; sequence TIKYKKLRQPLN. Residues 69–94 form a helical membrane-spanning segment; that stretch reads YILVNITVGGFLMCIFSIFPVFVSSS. At 95–108 the chain is on the extracellular side; the sequence is QGYFFFGRIACSID. The cysteines at positions 105 and 182 are disulfide-linked. A helical transmembrane segment spans residues 109–128; it reads AFVGTLTGLVTGWSLAFLAF. The Cytoplasmic portion of the chain corresponds to 129–147; that stretch reads ERYIVICKPMGNFNFSSSH. A helical transmembrane segment spans residues 148–171; that stretch reads ALAVVICTWIIGIVVSVPPFLGWS. Residues 172–197 are Extracellular-facing; it reads RYMPEGLQCSCGPDWYTVGTKYRSEY. The chain crosses the membrane as a helical span at residues 198-225; it reads YTWFIFIFCFVIPLSLICFSYGRLLGAL. At 226–247 the chain is on the cytoplasmic side; it reads RAVAAQQQESASTQKAEREVSR. Residues 248–271 form a helical membrane-spanning segment; it reads MVIFMVGSFCLCYVPYAAMAMYMV. The Extracellular segment spans residues 272–279; that stretch reads TNRNHGLD. The helical transmembrane segment at 280–304 threads the bilayer; the sequence is LRLVTIPAFFSKSSCVYNPIIYSFM. Lys-291 is modified (N6-(retinylidene)lysine). At 305-347 the chain is on the cytoplasmic side; the sequence is NKQFRGCIMETVCGRPMSDDSSVSSTSQRTEVSTVSSSQVSPA. Residues 323-347 are disordered; it reads DDSSVSSTSQRTEVSTVSSSQVSPA.

It belongs to the G-protein coupled receptor 1 family. Opsin subfamily. Phosphorylated on some or all of the serine and threonine residues present in the C-terminal region. The color pigments are found in the cone photoreceptor cells.

It is found in the membrane. Visual pigments are the light-absorbing molecules that mediate vision. They consist of an apoprotein, opsin, covalently linked to cis-retinal. This chain is Violet-sensitive opsin, found in Xenopus laevis (African clawed frog).